We begin with the raw amino-acid sequence, 289 residues long: Arabinogalactan O-methyltransferase 1 (289 aa).

Residues 12–32 (IITGVLLAGLVGGALLFTSFI) traverse the membrane as a helical segment.

Belongs to the methyltransferase superfamily. Binds to the translation initiation factors TIF3E1.

Its subcellular location is the golgi apparatus membrane. Involved in the methylation of glucuronic acid of different plant cell wall component, but mainly on side chains of arabinogalactans. This Arabidopsis thaliana (Mouse-ear cress) protein is Arabinogalactan O-methyltransferase 1 (AGM1).